We begin with the raw amino-acid sequence, 208 residues long: Thioesterase 1/protease 1/lysophospholipase L1 (208 aa).

The signal sequence occupies residues 1-26; it reads MMNFNNVFRWHLPFLFLVLLTFRAAA. Ser36 acts as the Nucleophile in catalysis. Gly70 and Asn99 together coordinate substrate. Residues Asp180 and His183 contribute to the active site.

Belongs to the 'GDSL' lipolytic enzyme family. In terms of assembly, monomer or homotetramer.

The protein localises to the periplasm. It carries out the reaction a fatty acyl-CoA + H2O = a fatty acid + CoA + H(+). The enzyme catalyses hexadecanoyl-CoA + H2O = hexadecanoate + CoA + H(+). The catalysed reaction is (9Z)-hexadecenoyl-CoA + H2O = (9Z)-hexadecenoate + CoA + H(+). It catalyses the reaction octadecanoyl-CoA + H2O = octadecanoate + CoA + H(+). It carries out the reaction (9Z)-octadecenoyl-CoA + H2O = (9Z)-octadecenoate + CoA + H(+). The enzyme catalyses (9Z)-octadecenoyl-[ACP] + H2O = (9Z)-octadecenoate + holo-[ACP] + H(+). The catalysed reaction is (11Z)-octadecenoyl-CoA + H2O = (11Z)-octadecenoate + CoA + H(+). It catalyses the reaction tetradecanoyl-CoA + H2O = tetradecanoate + CoA + H(+). It carries out the reaction (5Z,8Z,11Z,14Z)-eicosatetraenoyl-CoA + H2O = (5Z,8Z,11Z,14Z)-eicosatetraenoate + CoA + H(+). The enzyme catalyses dodecanoyl-CoA + H2O = dodecanoate + CoA + H(+). The catalysed reaction is decanoyl-CoA + H2O = decanoate + CoA + H(+). It catalyses the reaction hexanoyl-CoA + H2O = hexanoate + CoA + H(+). It carries out the reaction a 1-acyl-sn-glycero-3-phosphocholine + H2O = sn-glycerol 3-phosphocholine + a fatty acid + H(+). The enzyme catalyses a phenyl acetate + H2O = a phenol + acetate + H(+). The catalysed reaction is a butanoate ester + H2O = an aliphatic alcohol + butanoate + H(+). It catalyses the reaction a hexanoate ester + H2O = an aliphatic alcohol + hexanoate + H(+). It carries out the reaction an octanoate ester + H2O = an aliphatic alcohol + octanoate + H(+). In terms of biological role, tesA is a multifunctional esterase that can act as a thioesterase, arylesterase, lysophospholipase and protease. This Escherichia coli O6:H1 (strain CFT073 / ATCC 700928 / UPEC) protein is Thioesterase 1/protease 1/lysophospholipase L1 (tesA).